Consider the following 638-residue polypeptide: DNA mismatch repair protein MutL (638 aa).

Residues Phe404 to Arg433 are disordered.

The protein belongs to the DNA mismatch repair MutL/HexB family.

Functionally, this protein is involved in the repair of mismatches in DNA. It is required for dam-dependent methyl-directed DNA mismatch repair. May act as a 'molecular matchmaker', a protein that promotes the formation of a stable complex between two or more DNA-binding proteins in an ATP-dependent manner without itself being part of a final effector complex. This chain is DNA mismatch repair protein MutL, found in Shewanella baltica (strain OS195).